The chain runs to 1276 residues: Probable histone acetyltransferase HAC-like 3 (1276 aa).

The tract at residues 391 to 421 is disordered; it reads VDRAEQTSNSTVSKPTSPASDGSSGKHYPAK. Residues 396-413 show a composition bias toward polar residues; it reads QTSNSTVSKPTSPASDGS. The segment at 621-689 adopts a PHD-type zinc-finger fold; that stretch reads SSICGRCHHL…EYTCAKCFLK (69 aa). The region spanning 704–1130 is the CBP/p300-type HAT domain; sequence ILGARELPRT…ILYHLHDSTC (427 aa). Acetyl-CoA is bound by residues 827-829, 846-847, and tryptophan 902; these read IDS and RT. Residues 953–973 are a coiled coil; that stretch reads EAERLLEKKDDDTSQKKETQL. 2 ZZ-type zinc fingers span residues 1013-1076 and 1125-1187; these read CLQQ…EEPL and LHDS…LQDY. Cysteine 1018, cysteine 1021, cysteine 1033, cysteine 1036, cysteine 1042, cysteine 1045, histidine 1058, histidine 1066, cysteine 1130, cysteine 1133, cysteine 1145, cysteine 1148, cysteine 1154, cysteine 1157, histidine 1168, and histidine 1177 together coordinate Zn(2+). A TAZ-type zinc finger spans residues 1177 to 1260; the sequence is HVLQKYTLQD…DCSAPRCRDI (84 aa).

The protein resides in the nucleus. It catalyses the reaction L-lysyl-[protein] + acetyl-CoA = N(6)-acetyl-L-lysyl-[protein] + CoA + H(+). Functionally, acetyltransferase enzyme. Acetylates histones, giving a specific tag for transcriptional activation. This Oryza sativa subsp. japonica (Rice) protein is Probable histone acetyltransferase HAC-like 3.